Here is a 238-residue protein sequence, read N- to C-terminus: Triggering receptor expressed on myeloid cells 1 (238 aa).

Positions 1–20 are cleaved as a signal peptide; sequence MRSARLGRLLWMLFITEIQA. Residues 21-129 form the Ig-like V-type domain; the sequence is ATELPEEKYI…KDPIILFYPV (109 aa). Residues 21–210 are Extracellular-facing; the sequence is ATELPEEKYI…DITRDTEISL (190 aa). C41 and C113 are oxidised to a cystine. A glycan (N-linked (GlcNAc...) asparagine) is linked at N135. The tract at residues 141–169 is disordered; the sequence is PASAETPTQSCSPTTTLPPTTTTNRHRPR. Low complexity predominate over residues 146 to 163; the sequence is TPTQSCSPTTTLPPTTTT. An N-linked (GlcNAc...) asparagine glycan is attached at N198. A helical membrane pass occupies residues 211 to 231; that stretch reads ILPAVCGLLSKSLVFIVLFVV. Residues 232-238 lie on the Cytoplasmic side of the membrane; the sequence is TRMSFTP.

In terms of assembly, monomer. Homomultimer; when activated. Interacts with TYROBP/DAP12. Interacts with TLR4.

It localises to the cell membrane. Functionally, cell surface receptor that plays important roles in innate and adaptive immunity by amplifying inflammatory responses. Upon activation by various ligands such as PGLYRP1, HMGB1 or HSP70, multimerizes and forms a complex with transmembrane adapter TYROBP/DAP12. In turn, initiates a SYK-mediated cascade of tyrosine phosphorylation, activating multiple downstream mediators such as BTK, MAPK1, MAPK3 or phospholipase C-gamma. This cascade promotes the neutrophil- and macrophage-mediated release of pro-inflammatory cytokines and/or chemokines, as well as their migration and thereby amplifies inflammatory responses that are triggered by bacterial and fungal infections. By also promoting the amplification of inflammatory signals that are initially triggered by Toll-like receptor (TLR) and NOD-like receptor engagement, plays a major role in the pathophysiology of acute and chronic inflammatory diseases of different etiologies including septic shock and atherosclerosis. The chain is Triggering receptor expressed on myeloid cells 1 (TREM1) from Sus scrofa (Pig).